The chain runs to 196 residues: Imidazoleglycerol-phosphate dehydratase (196 aa).

This sequence belongs to the imidazoleglycerol-phosphate dehydratase family.

The protein localises to the cytoplasm. It catalyses the reaction D-erythro-1-(imidazol-4-yl)glycerol 3-phosphate = 3-(imidazol-4-yl)-2-oxopropyl phosphate + H2O. It functions in the pathway amino-acid biosynthesis; L-histidine biosynthesis; L-histidine from 5-phospho-alpha-D-ribose 1-diphosphate: step 6/9. This Dehalococcoides mccartyi (strain CBDB1) protein is Imidazoleglycerol-phosphate dehydratase.